A 445-amino-acid polypeptide reads, in one-letter code: Tubulin beta chain (445 aa).

GTP is bound by residues glutamine 11, glutamate 69, serine 138, glycine 142, threonine 143, glycine 144, asparagine 204, and asparagine 226. Glutamate 69 is a Mg(2+) binding site.

The protein belongs to the tubulin family. In terms of assembly, dimer of alpha and beta chains. A typical microtubule is a hollow water-filled tube with an outer diameter of 25 nm and an inner diameter of 15 nM. Alpha-beta heterodimers associate head-to-tail to form protofilaments running lengthwise along the microtubule wall with the beta-tubulin subunit facing the microtubule plus end conferring a structural polarity. Microtubules usually have 13 protofilaments but different protofilament numbers can be found in some organisms and specialized cells. Mg(2+) is required as a cofactor.

It localises to the cytoplasm. The protein resides in the cytoskeleton. Functionally, tubulin is the major constituent of microtubules, a cylinder consisting of laterally associated linear protofilaments composed of alpha- and beta-tubulin heterodimers. Microtubules grow by the addition of GTP-tubulin dimers to the microtubule end, where a stabilizing cap forms. Below the cap, tubulin dimers are in GDP-bound state, owing to GTPase activity of alpha-tubulin. This Leishmania mexicana protein is Tubulin beta chain.